The primary structure comprises 630 residues: Adagio-like protein 3 (630 aa).

The region spanning 54 to 126 (EDEAAAWEGR…PLVDPMVVSE (73 aa)) is the PAS domain. Cys102 is modified (S-4a-FMN cysteine). One can recognise an F-box domain in the interval 220 to 268 (YCCILQLSDEVLAHNILSRLSPRDVASIGSVCTRMHELTKNDHLRKMVC). Kelch repeat units lie at residues 380–430 (SWLV…CTLD), 432–483 (SKLV…SVFG), 485–537 (TKLF…RLDH), 545–597 (GRII…CVVG), and 599–629 (TRVLVLGGHTGEEWILNELHELCLASRPDED).

This sequence belongs to the ADAGIO family. In terms of processing, FMN binds covalently to cysteine after exposure to blue light and is reversed in the dark.

The protein localises to the nucleus. The protein operates within protein modification; protein ubiquitination. Functionally, component of an E3 ubiquitin ligase complex that plays a central role in blue light-dependent circadian cycles. Acts as a blue light photoreceptor, due to the presence of FMN, that mediates light-regulated protein degradation of critical clock components by targeting them to the proteasome complex. The SCF(ADO3) E3 ubiquitin ligase complex is involved in the regulation of circadian clock-dependent processes including transition to flowering time, hypocotyl elongation, cotyledons and leaf movement rhythms. In Oryza sativa subsp. japonica (Rice), this protein is Adagio-like protein 3.